An 81-amino-acid polypeptide reads, in one-letter code: uncharacterized protein (81 aa).

This is an uncharacterized protein from Autographa californica nuclear polyhedrosis virus (AcMNPV).